The sequence spans 289 residues: Serine/threonine-protein phosphatase Pgam5, mitochondrial (289 aa).

A helical membrane pass occupies residues 7–23 (FACGTGAGLLTFYLTKL).

This sequence belongs to the phosphoglycerate mutase family. BPG-dependent PGAM subfamily. As to quaternary structure, interacts with Pk92B/ASK1.

It localises to the mitochondrion outer membrane. The catalysed reaction is O-phospho-L-seryl-[protein] + H2O = L-seryl-[protein] + phosphate. It catalyses the reaction O-phospho-L-threonyl-[protein] + H2O = L-threonyl-[protein] + phosphate. In terms of biological role, displays phosphatase activity for serine/threonine residues, and dephosphorylates and activates Pk92B kinase. Has apparently no phosphoglycerate mutase activity. The sequence is that of Serine/threonine-protein phosphatase Pgam5, mitochondrial from Drosophila persimilis (Fruit fly).